A 456-amino-acid chain; its full sequence is RuvB-like 1 (456 aa).

70–77 (GPPGTGKT) contributes to the ATP binding site.

Belongs to the RuvB family. As to quaternary structure, forms homohexameric rings. Can form a dodecamer with ruvbl2 made of two stacked hexameric rings. Is a component of the RNA polymerase II holoenzyme complex. Component of the chromatin-remodeling Ino80 complex. Component of some MLL1/MLL complex.

It is found in the nucleus. Its subcellular location is the dynein axonemal particle. The enzyme catalyses ATP + H2O = ADP + phosphate + H(+). Its function is as follows. Has single-stranded DNA-stimulated ATPase and ATP-dependent DNA helicase (3' to 5') activity suggesting a role in nuclear processes such as recombination and transcription. Proposed core component of the chromatin remodeling INO80 complex which exhibits DNA- and nucleosome-activated ATPase activity and catalyzes ATP-dependent nucleosome sliding. The protein is RuvB-like 1 (ruvbl1) of Xenopus laevis (African clawed frog).